Reading from the N-terminus, the 201-residue chain is CASP-like protein 2B2 (201 aa).

At 1–28 the chain is on the cytoplasmic side; it reads MSYLGVGVSPGNVSGSTTKMKLIDRKVR. Residues 29–49 traverse the membrane as a helical segment; the sequence is VTELILRCLVCVLALVAAILI. At 50–71 the chain is on the extracellular side; sequence ATDVQVREIFMIQKKAKFTDMK. The helical transmembrane segment at 72–92 threads the bilayer; sequence ALVLLVVVNGIAAGYSLVQAV. Residues 93 to 108 lie on the Cytoplasmic side of the membrane; it reads RCVVGLMKGRVLFSKP. Residues 109–129 form a helical membrane-spanning segment; sequence LAWAIFFGDQAVAYLCVAGVA. The Extracellular portion of the chain corresponds to 130–166; the sequence is AAAQSAAFAKLGEPELQWMKICNMYGKFCNQVGEGIA. The helical transmembrane segment at 167–187 threads the bilayer; it reads SALFACIGMVLISCISAFGVF. Residues 188–201 are Cytoplasmic-facing; it reads RLYGGSKSRPSSRW.

This sequence belongs to the Casparian strip membrane proteins (CASP) family. As to quaternary structure, homodimer and heterodimers.

It is found in the cell membrane. The chain is CASP-like protein 2B2 from Arabidopsis thaliana (Mouse-ear cress).